Consider the following 280-residue polypeptide: Energy-coupling factor transporter ATP-binding protein EcfA1 (280 aa).

Residues 6 to 241 (LRTENISFQY…SHMLQEIGLD (236 aa)) form the ABC transporter domain. 40-47 (GQNGSGKS) lines the ATP pocket.

It belongs to the ABC transporter superfamily. Energy-coupling factor EcfA family. Forms a stable energy-coupling factor (ECF) transporter complex composed of 2 membrane-embedded substrate-binding proteins (S component), 2 ATP-binding proteins (A component) and 2 transmembrane proteins (T component).

The protein localises to the cell membrane. Functionally, ATP-binding (A) component of a common energy-coupling factor (ECF) ABC-transporter complex. Unlike classic ABC transporters this ECF transporter provides the energy necessary to transport a number of different substrates. This is Energy-coupling factor transporter ATP-binding protein EcfA1 from Bacillus cereus (strain ZK / E33L).